Here is a 365-residue protein sequence, read N- to C-terminus: 3-dehydroquinate synthase (365 aa).

Residues 72 to 77, 130 to 131, Lys-142, and Lys-151 contribute to the NAD(+) site; these read SGEKEK and TT. Residues Glu-184, His-247, and His-264 each coordinate Zn(2+).

It belongs to the sugar phosphate cyclases superfamily. Dehydroquinate synthase family. Requires Co(2+) as cofactor. The cofactor is Zn(2+). It depends on NAD(+) as a cofactor.

It localises to the cytoplasm. The catalysed reaction is 7-phospho-2-dehydro-3-deoxy-D-arabino-heptonate = 3-dehydroquinate + phosphate. The protein operates within metabolic intermediate biosynthesis; chorismate biosynthesis; chorismate from D-erythrose 4-phosphate and phosphoenolpyruvate: step 2/7. In terms of biological role, catalyzes the conversion of 3-deoxy-D-arabino-heptulosonate 7-phosphate (DAHP) to dehydroquinate (DHQ). This is 3-dehydroquinate synthase from Bacillus cereus (strain AH187).